The primary structure comprises 338 residues: MNLKKFPRHVLTFGPTPIQPLKRLSAHLGGKVDLYAKREDCNSGLAFGGNKTRKLEYLIPEALEGGYDTLVSIGGIQSNQTRQVAAVAAHLGLKCVLVQENWVNYSDAVYDRVGNIEMSRIMGADVRLDAAGFDIGIRQSWEQAMADVRAAGGKPFPIPAGCSEHPRGGLGSVGFAEEVRQQEAELGFKFDYLVVCSVTGSTQAGMVVGFAADGRADRVIGIDASAKPQQTFEQILRIAKNTAELVELGRDITEKDVVLDRRFGGPEYGLPNEGTLEAIRLSARFEGMLTDPVYEGKSMHGMIEKVRLGEFPAGSKVLYAHLGGVPALNAYSFLFRNG.

An N6-(pyridoxal phosphate)lysine modification is found at Lys-51. Ser-78 serves as the catalytic Nucleophile.

Belongs to the ACC deaminase/D-cysteine desulfhydrase family. Homotrimer. The cofactor is pyridoxal 5'-phosphate.

It carries out the reaction 1-aminocyclopropane-1-carboxylate + H2O = 2-oxobutanoate + NH4(+). Its function is as follows. Catalyzes a cyclopropane ring-opening reaction, the irreversible conversion of 1-aminocyclopropane-1-carboxylate (ACC) to ammonia and alpha-ketobutyrate. Allows growth on ACC as a nitrogen source. This chain is 1-aminocyclopropane-1-carboxylate deaminase, found in Variovorax paradoxus.